The chain runs to 944 residues: DNA ligase 4 (944 aa).

Glutamate 280, lysine 282, arginine 287, glutamate 340, phenylalanine 382, glutamate 442, lysine 447, lysine 464, and lysine 466 together coordinate ATP. Lysine 282 functions as the N6-AMP-lysine intermediate in the catalytic mechanism. Glutamate 340 is a binding site for Mg(2+). Glutamate 442 contacts Mg(2+). 2 BRCT domains span residues 681-780 (PISN…PNYC) and 836-941 (FPLF…DFPV).

The protein belongs to the ATP-dependent DNA ligase family. In terms of assembly, component of the DNA ligase IV complex, composed of DNL4, LIF1 and NEJ1. Interacts (via BRCT domain) with LIF1. Interacts with NEJ1. Interacts with POL4 in the DNL4-LIF1 complex. Mg(2+) is required as a cofactor.

The protein localises to the nucleus. It catalyses the reaction ATP + (deoxyribonucleotide)n-3'-hydroxyl + 5'-phospho-(deoxyribonucleotide)m = (deoxyribonucleotide)n+m + AMP + diphosphate.. Functionally, DNA ligase involved in DNA non-homologous end joining (NHEJ); required for double-strand break (DSB) repair. The protein is DNA ligase 4 (DNL4) of Saccharomyces cerevisiae (strain ATCC 204508 / S288c) (Baker's yeast).